A 166-amino-acid chain; its full sequence is Cytochrome c-550 2 (166 aa).

An N-terminal signal peptide occupies residues Met-1–Ala-32. Heme c-binding residues include Cys-71, Cys-74, and His-75.

This sequence belongs to the cytochrome c family. PsbV subfamily. It depends on heme c as a cofactor.

The protein resides in the cell inner membrane. Functionally, probable low-potential cytochrome c, might function in photosystem II (PSII). The protein is Cytochrome c-550 2 (psbV2) of Gloeobacter violaceus (strain ATCC 29082 / PCC 7421).